The chain runs to 543 residues: ABC transport system permease protein p69 (543 aa).

A run of 12 helical transmembrane segments spans residues isoleucine 18–isoleucine 38, alanine 78–tryptophan 98, isoleucine 115–phenylalanine 135, alanine 141–phenylalanine 161, threonine 211–isoleucine 231, leucine 237–phenylalanine 257, isoleucine 288–isoleucine 308, isoleucine 354–leucine 374, phenylalanine 379–phenylalanine 399, isoleucine 413–phenylalanine 433, leucine 482–glutamate 502, and glycine 510–valine 530. Residues leucine 74–valine 256 form the ABC transmembrane type-1 domain.

It belongs to the binding-protein-dependent transport system permease family.

The protein localises to the cell membrane. Functionally, probably part of a high-affinity transport system. The chain is ABC transport system permease protein p69 (p69) from Mycoplasma genitalium (strain ATCC 33530 / DSM 19775 / NCTC 10195 / G37) (Mycoplasmoides genitalium).